The following is a 456-amino-acid chain: Carnosine N-methyltransferase unmet (456 aa).

Residues Arg154, Gly195, Glu216, Asp282, Phe283, and Cys299 each contribute to the S-adenosyl-L-methionine site. Residues Asp303, His334, and Tyr385 each coordinate carnosine. Basic and acidic residues predominate over residues 402–418 (RGKRKASREPHDLIVRE). Positions 402–456 (RGKRKASREPHDLIVREDSEEEGEQQPERNETEEKQQLKPLATANCETEIKEQPS) are disordered. Phosphoserine occurs at positions 408 and 420. The span at 427 to 438 (QPERNETEEKQQ) shows a compositional bias: basic and acidic residues.

The protein belongs to the carnosine N-methyltransferase family. As to quaternary structure, associates with the GATOR2 complex; the interaction is probably direct and is inhibited by S-adenosyl-L-methionine binding. Associates with the GATOR1 complex; the interaction is probably indirect and mediated by the GATOR2 complex.

It carries out the reaction carnosine + S-adenosyl-L-methionine = anserine + S-adenosyl-L-homocysteine + H(+). S-adenosyl-L-methionine-binding protein that acts as a sensor to signal methionine availability to the mTORC1 signaling pathway. Associates with the GATOR2 complex in the absence of methionine to inhibit mTORC1 signaling, but dissociates in the presence of the methionine derivative S-adenosyl-L-methionine; S-adenosyl-L-homocysteine binding does not induce dissociation. Required for mTORC1 pathway response to methionine starvation. Exerts a protective function on developing egg chambers by inhibiting mTORC1 signaling under starvation conditions. May also function as a N-methyltransferase that mediates the formation of anserine (beta-alanyl-N(Pi)-methyl-L-histidine) from carnosine. It is unclear whether this protein has retained N-methyltransferase activity or if it is an evolutionary intermediate whose substrate binding ability has been co-opted to function as a nutrient sensor for mTORC1 signaling. The polypeptide is Carnosine N-methyltransferase unmet (Drosophila melanogaster (Fruit fly)).